A 308-amino-acid polypeptide reads, in one-letter code: Oligopeptide transport system permease protein AmiD (308 aa).

The next 6 membrane-spanning stretches (helical) occupy residues Thr43–Phe63, Ile111–Ile131, Val145–Ala167, Asn171–Leu193, Met234–Ile254, and Ala274–Val294. The ABC transmembrane type-1 domain occupies Ala107–Gly295.

This sequence belongs to the binding-protein-dependent transport system permease family. OppBC subfamily.

Its subcellular location is the cell membrane. Functionally, part of the binding-protein-dependent transport system for oligopeptides; probably responsible for the translocation of the substrate across the membrane. This Streptococcus pneumoniae (strain ATCC BAA-255 / R6) protein is Oligopeptide transport system permease protein AmiD (amiD).